The primary structure comprises 174 residues: Transgelin (174 aa).

Residues 3–109 (SQLEKEAREW…SIHSFSRYAA (107 aa)) enclose the Calponin-homology (CH) domain.

As to quaternary structure, binds to actin.

It localises to the cytoplasm. Functionally, has actin-binding and actin-bundling activity and is a component of the actin patch. Stabilizes actin filaments against disassembly. Cross-links F-actin and is required for the formation of the contractile F-actin ring. The chain is Transgelin (stg1) from Schizosaccharomyces pombe (strain 972 / ATCC 24843) (Fission yeast).